The following is a 432-amino-acid chain: Asparagine--tRNA ligase (432 aa).

Belongs to the class-II aminoacyl-tRNA synthetase family. In terms of assembly, homodimer.

It is found in the cytoplasm. It catalyses the reaction tRNA(Asn) + L-asparagine + ATP = L-asparaginyl-tRNA(Asn) + AMP + diphosphate + H(+). This Limosilactobacillus reuteri (strain DSM 20016) (Lactobacillus reuteri) protein is Asparagine--tRNA ligase.